The sequence spans 144 residues: MRLNTLSPAVGAKSAPKRVGRGIGSGLGKTAGRGHKGQKSRSGGGVRPGFEGGQMPLKIRLPKFGFTSRVSMVTAEVRLGELAKVNGDVIDLNALKDANVVTRNIQFAKVVLSGTIERPVTVKGLKVTKGARAAIEAAGGKIEE.

Positions 1–53 are disordered; sequence MRLNTLSPAVGAKSAPKRVGRGIGSGLGKTAGRGHKGQKSRSGGGVRPGFEGG. Gly residues-rich tracts occupy residues 21-31 and 42-52; these read RGIGSGLGKTA and SGGGVRPGFEG.

The protein belongs to the universal ribosomal protein uL15 family. In terms of assembly, part of the 50S ribosomal subunit.

Functionally, binds to the 23S rRNA. This Shewanella amazonensis (strain ATCC BAA-1098 / SB2B) protein is Large ribosomal subunit protein uL15.